The primary structure comprises 1200 residues: Nuclear pore complex protein Nup133 (1200 aa).

The tract at residues 1–28 (MERNLQKQLYGISRESSPGARRYSMPAA) is disordered.

The protein belongs to the nucleoporin Nup133 family. In terms of assembly, forms part of the Nup107-Nup160 subcomplex in the nuclear pore.

The protein resides in the nucleus. Its subcellular location is the nuclear pore complex. Probable component of the nuclear pore complex (NPC). Plays a role in NPC assembly and/or maintenance. This is Nuclear pore complex protein Nup133 from Drosophila melanogaster (Fruit fly).